Here is a 397-residue protein sequence, read N- to C-terminus: Odorant receptor 98a (397 aa).

Over 1 to 43 (MLFNYLRKPNPTNLLTSPDSFRYFEYGMFCMGWHTPATHKIIY) the chain is Cytoplasmic. The helical transmembrane segment at 44–64 (YITSCLIFAWCAVYLPIGIII) threads the bilayer. The Extracellular portion of the chain corresponds to 65–77 (SFKTDINTFTPNE). Residues 78–98 (LLTVMQLFFNSVGMPFKVLFF) form a helical membrane-spanning segment. Residues 99–138 (NLYISGFYKAKKLLSEMDKRCTTLKERVEVHQGVVRCNKA) are Cytoplasmic-facing. A helical transmembrane segment spans residues 139–159 (YLIYQFIYTAYTISTFLSAAL). The Extracellular portion of the chain corresponds to 160 to 192 (SGKLPWRIYNPFVDFRESRSSFWKAALNETALM). The N-linked (GlcNAc...) asparagine glycan is linked to Asn-187. The chain crosses the membrane as a helical span at residues 193 to 213 (LFAVTQTLMSDIYPLLYGLIL). Residues 214-266 (RVHLKLLRLRVESLCTDSGKSDAENEQDLIKCIKDHNLIIDYAAAIRPAVTRT) are Cytoplasmic-facing. Residues 267 to 287 (IFVQFLLIGICLGLSMINLLF) form a helical membrane-spanning segment. Topologically, residues 288–293 (FADIWT) are extracellular. The helical transmembrane segment at 294 to 314 (GLATVAYINGLMVQTFPFCFV) threads the bilayer. Over 315–354 (CDLLKKDCELLVSAIFHSNWINSSRSYKSSLRYFLKNAQK) the chain is Cytoplasmic. The chain crosses the membrane as a helical span at residues 355–375 (SIAFTAGSIFPISTGSNIKVA). Topologically, residues 376-397 (KLAFSVVTFVNQLNIADRLTKN) are extracellular.

This sequence belongs to the insect chemoreceptor superfamily. Heteromeric odorant receptor channel (TC 1.A.69) family. Or2a subfamily. Interacts with Orco. Complexes exist early in the endomembrane system in olfactory sensory neurons (OSNs), coupling these complexes to the conserved ciliary trafficking pathway. Expressed in olfactory sensory neurons in the antenna.

The protein localises to the cell membrane. Functionally, odorant receptor which mediates acceptance or avoidance behavior, depending on its substrates. The odorant receptor repertoire encodes a large collection of odor stimuli that vary widely in identity, intensity, and duration. May form a complex with Orco to form odorant-sensing units, providing sensitive and prolonged odorant signaling and calcium permeability. This chain is Odorant receptor 98a (Or98a), found in Drosophila melanogaster (Fruit fly).